We begin with the raw amino-acid sequence, 384 residues long: Probable inactive patatin-like protein 9 (384 aa).

The region spanning Leu-33–Val-234 is the PNPLA domain. Residues Gly-37–Gly-42 carry the GXGXXG motif. Catalysis depends on Asp-221, which acts as the Proton acceptor. Positions Asp-221 to Gly-223 match the DGA/G motif. Positions Gly-363–Arg-384 are disordered.

Belongs to the patatin family. In terms of tissue distribution, highly expressed in roots and at lower levels in flowers and siliques.

The sequence is that of Probable inactive patatin-like protein 9 (PLP9) from Arabidopsis thaliana (Mouse-ear cress).